We begin with the raw amino-acid sequence, 60 residues long: Large ribosomal subunit protein bL32 (60 aa).

The segment at 1–60 (MAVQQVKKSRSKRDMRRSHDSLTNPTLSTDKSTGELHLRHHVSPNGFYKGRKVVDTKSED) is disordered. The span at 7–16 (KKSRSKRDMR) shows a compositional bias: basic residues. Over residues 22–31 (LTNPTLSTDK) the composition is skewed to polar residues.

It belongs to the bacterial ribosomal protein bL32 family.

This Francisella tularensis subsp. holarctica (strain LVS) protein is Large ribosomal subunit protein bL32.